We begin with the raw amino-acid sequence, 69 residues long: NADH dehydrogenase [ubiquinone] 1 beta subcomplex subunit 2 (69 aa).

This sequence belongs to the complex I NDUFB2 subunit family. As to quaternary structure, complex I is composed of at least 49 different subunits.

The protein resides in the mitochondrion inner membrane. Accessory subunit of the mitochondrial membrane respiratory chain NADH dehydrogenase (Complex I), that is believed not to be involved in catalysis. Complex I functions in the transfer of electrons from NADH to the respiratory chain. The immediate electron acceptor for the enzyme is believed to be ubiquinone. This chain is NADH dehydrogenase [ubiquinone] 1 beta subcomplex subunit 2, found in Arabidopsis thaliana (Mouse-ear cress).